A 552-amino-acid chain; its full sequence is CTP synthase (552 aa).

The segment at 1 to 271 is amidoligase domain; sequence MASAASSKHL…DAFVVRRLGL (271 aa). Residue Ser18 participates in CTP binding. Residue Ser18 coordinates UTP. Residues 19 to 24 and Asp76 each bind ATP; that span reads SLGKGL. Mg(2+) contacts are provided by Asp76 and Glu145. CTP is bound by residues 152–154, 192–197, and Lys228; these read DIE and KTKPTQ. Residues 192-197 and Lys228 each bind UTP; that span reads KTKPTQ. Positions 296-546 constitute a Glutamine amidotransferase type-1 domain; it reads TIALVGKYVD…IEAALKYSAG (251 aa). Residue Gly359 participates in L-glutamine binding. Cys386 (nucleophile; for glutamine hydrolysis) is an active-site residue. L-glutamine contacts are provided by residues 387-390, Glu410, and Arg472; that span reads LGLQ. Residues His519 and Glu521 contribute to the active site.

Belongs to the CTP synthase family. In terms of assembly, homotetramer.

The catalysed reaction is UTP + L-glutamine + ATP + H2O = CTP + L-glutamate + ADP + phosphate + 2 H(+). It carries out the reaction L-glutamine + H2O = L-glutamate + NH4(+). The enzyme catalyses UTP + NH4(+) + ATP = CTP + ADP + phosphate + 2 H(+). It functions in the pathway pyrimidine metabolism; CTP biosynthesis via de novo pathway; CTP from UDP: step 2/2. Its activity is regulated as follows. Allosterically activated by GTP, when glutamine is the substrate; GTP has no effect on the reaction when ammonia is the substrate. The allosteric effector GTP functions by stabilizing the protein conformation that binds the tetrahedral intermediate(s) formed during glutamine hydrolysis. Inhibited by the product CTP, via allosteric rather than competitive inhibition. Functionally, catalyzes the ATP-dependent amination of UTP to CTP with either L-glutamine or ammonia as the source of nitrogen. Regulates intracellular CTP levels through interactions with the four ribonucleotide triphosphates. The protein is CTP synthase of Thermobifida fusca (strain YX).